A 551-amino-acid chain; its full sequence is Dihydroxy-acid dehydratase (551 aa).

Asp-78 provides a ligand contact to Mg(2+). Cys-119 is a [2Fe-2S] cluster binding site. Mg(2+) contacts are provided by Asp-120 and Lys-121. Lys-121 bears the N6-carboxylysine mark. Position 191 (Cys-191) interacts with [2Fe-2S] cluster. Glu-442 serves as a coordination point for Mg(2+). The Proton acceptor role is filled by Ser-468.

The protein belongs to the IlvD/Edd family. As to quaternary structure, homodimer. [2Fe-2S] cluster serves as cofactor. Requires Mg(2+) as cofactor.

It catalyses the reaction (2R)-2,3-dihydroxy-3-methylbutanoate = 3-methyl-2-oxobutanoate + H2O. It carries out the reaction (2R,3R)-2,3-dihydroxy-3-methylpentanoate = (S)-3-methyl-2-oxopentanoate + H2O. The protein operates within amino-acid biosynthesis; L-isoleucine biosynthesis; L-isoleucine from 2-oxobutanoate: step 3/4. It participates in amino-acid biosynthesis; L-valine biosynthesis; L-valine from pyruvate: step 3/4. Functionally, functions in the biosynthesis of branched-chain amino acids. Catalyzes the dehydration of (2R,3R)-2,3-dihydroxy-3-methylpentanoate (2,3-dihydroxy-3-methylvalerate) into 2-oxo-3-methylpentanoate (2-oxo-3-methylvalerate) and of (2R)-2,3-dihydroxy-3-methylbutanoate (2,3-dihydroxyisovalerate) into 2-oxo-3-methylbutanoate (2-oxoisovalerate), the penultimate precursor to L-isoleucine and L-valine, respectively. This Halothermothrix orenii (strain H 168 / OCM 544 / DSM 9562) protein is Dihydroxy-acid dehydratase.